A 429-amino-acid chain; its full sequence is D-inositol 3-phosphate glycosyltransferase (429 aa).

A 1D-myo-inositol 3-phosphate-binding site is contributed by His20. Residues 26 to 27 (QP) and Gly34 each bind UDP-N-acetyl-alpha-D-glucosamine. Residues 31 to 36 (DAGGMN), Lys89, Tyr122, Thr146, and Arg166 contribute to the 1D-myo-inositol 3-phosphate site. Residues Arg240, Lys245, and Gln306 each contribute to the UDP-N-acetyl-alpha-D-glucosamine site. Residues Tyr315, Arg316, and Ala318 each contribute to the Mg(2+) site. UDP-N-acetyl-alpha-D-glucosamine is bound by residues Glu328 and Glu336. Residue Thr342 participates in Mg(2+) binding.

This sequence belongs to the glycosyltransferase group 1 family. MshA subfamily. In terms of assembly, homodimer.

The enzyme catalyses 1D-myo-inositol 3-phosphate + UDP-N-acetyl-alpha-D-glucosamine = 1D-myo-inositol 2-acetamido-2-deoxy-alpha-D-glucopyranoside 3-phosphate + UDP + H(+). Functionally, catalyzes the transfer of a N-acetyl-glucosamine moiety to 1D-myo-inositol 3-phosphate to produce 1D-myo-inositol 2-acetamido-2-deoxy-glucopyranoside 3-phosphate in the mycothiol biosynthesis pathway. In Nocardiopsis dassonvillei (strain ATCC 23218 / DSM 43111 / CIP 107115 / JCM 7437 / KCTC 9190 / NBRC 14626 / NCTC 10488 / NRRL B-5397 / IMRU 509) (Actinomadura dassonvillei), this protein is D-inositol 3-phosphate glycosyltransferase.